The chain runs to 321 residues: Thymidylate synthase (321 aa).

The tract at residues 1 to 32 is disordered; it reads MVLTPTKDGPDQESMPLPADNGESPSKQQAPV. Residues Ser24 and Ser26 each carry the phosphoserine modification. Tyr39 is modified (phosphotyrosine). DUMP-binding positions include Arg56 and 181–182; that span reads RR. The active-site Nucleophile is Cys201. At Tyr208 the chain carries Phosphotyrosine. The residue at position 210 (Ser210) is a Phosphoserine. Residues 223-226, Asn234, and 264-266 contribute to the dUMP site; these read RSAD and HVY. Position 226 (Asp226) interacts with (6R)-5,10-methylene-5,6,7,8-tetrahydrofolate. Ala320 lines the (6R)-5,10-methylene-5,6,7,8-tetrahydrofolate pocket.

It belongs to the thymidylate synthase family. As to quaternary structure, homodimer.

The enzyme catalyses dUMP + (6R)-5,10-methylene-5,6,7,8-tetrahydrofolate = 7,8-dihydrofolate + dTMP. The protein operates within pyrimidine metabolism; dTTP biosynthesis. This is Thymidylate synthase (Ts) from Drosophila melanogaster (Fruit fly).